A 201-amino-acid polypeptide reads, in one-letter code: Ras-related protein Rab-9A (201 aa).

N-acetylalanine is present on Ala-2. GTP is bound by residues Gly-17, Val-18, Gly-19, Lys-20, Ser-21, Ser-22, Ser-34, His-38, and Thr-39. A Mg(2+)-binding site is contributed by Ser-21. A Switch 1 motif is present at residues 31–42; it reads KFDSQLFHTIGV. Residue Ser-34 is modified to Phosphoserine. Positions 39 and 62 each coordinate Mg(2+). Residues 64–78 carry the Switch 2 motif; sequence AGQERFRSLRTPFYR. Gly-65, Asn-124, Lys-125, Asp-127, and Lys-156 together coordinate GTP. Phosphoserine is present on Ser-179. Thr-187 is modified (phosphothreonine). 2 S-geranylgeranyl cysteine lipidation sites follow: Cys-200 and Cys-201.

Belongs to the small GTPase superfamily. Rab family. Interacts (preferentially in its GTP-bound form) with GCC2 (via its GRIP domain). Interacts (GTP-bound form) with SGSM1; the GDP-bound form has much lower affinity for SGSM1. Interacts with SGSM2. The GTP-bound form but not the GDP-bound form interacts with HPS4 and the BLOC-3 complex (heterodimer of HPS1 and HPS4) but does not interact with HPS1 alone. Interacts (GTP-bound form) with NDE1; two RAB9A-GTP molecules lie on the opposite sides of the NDE1 homodimer; the interaction leads to RAB9A-dynein motor tethering. Interacts (GTP-bound form) with NDEL1. Requires Mg(2+) as cofactor.

The protein localises to the cell membrane. It is found in the endoplasmic reticulum membrane. The protein resides in the golgi apparatus membrane. It localises to the late endosome. Its subcellular location is the cytoplasmic vesicle. The protein localises to the phagosome membrane. It is found in the phagosome. The protein resides in the cytoplasmic vesicle membrane. It localises to the melanosome. The catalysed reaction is GTP + H2O = GDP + phosphate + H(+). Its activity is regulated as follows. Regulated by guanine nucleotide exchange factors (GEFs) which promote the exchange of bound GDP for free GTP. Regulated by GTPase activating proteins (GAPs) which increase the GTP hydrolysis activity. Inhibited by GDP dissociation inhibitors (GDIs). Its function is as follows. The small GTPases Rab are key regulators of intracellular membrane trafficking, from the formation of transport vesicles to their fusion with membranes. Rabs cycle between an inactive GDP-bound form and an active GTP-bound form that is able to recruit to membranes different sets of downstream effectors directly responsible for vesicle formation, movement, tethering and fusion. RAB9A is involved in the transport of proteins between the endosomes and the trans-Golgi network (TGN). Specifically uses NDE1/NDEL1 as an effector to interact with the dynein motor complex in order to control retrograde trafficking of RAB9-associated late endosomes to the TGN. Involved in the recruitment of SGSM2 to melanosomes and is required for the proper trafficking of melanogenic enzymes TYR, TYRP1 and DCT/TYRP2 to melanosomes in melanocytes. The sequence is that of Ras-related protein Rab-9A from Rattus norvegicus (Rat).